Consider the following 105-residue polypeptide: Protein yippee-like At4g27740 (105 aa).

The Yippee domain occupies 8–105; it reads PTYFCRNCEN…IEKLKLTKRY (98 aa). Zn(2+)-binding residues include cysteine 12, cysteine 15, cysteine 68, and cysteine 71.

The protein belongs to the yippee family.

This chain is Protein yippee-like At4g27740, found in Arabidopsis thaliana (Mouse-ear cress).